The primary structure comprises 233 residues: Glucosamine-6-phosphate deaminase (233 aa).

Residue Asp62 is the Proton acceptor; for enolization step of the active site. Asn128 functions as the For ring-opening step in the catalytic mechanism. Catalysis depends on His130, which acts as the Proton acceptor; for ring-opening step. The active-site For ring-opening step is the Glu135.

This sequence belongs to the glucosamine/galactosamine-6-phosphate isomerase family. NagB subfamily.

It catalyses the reaction alpha-D-glucosamine 6-phosphate + H2O = beta-D-fructose 6-phosphate + NH4(+). Its pathway is amino-sugar metabolism; N-acetylneuraminate degradation; D-fructose 6-phosphate from N-acetylneuraminate: step 5/5. Functionally, catalyzes the reversible isomerization-deamination of glucosamine 6-phosphate (GlcN6P) to form fructose 6-phosphate (Fru6P) and ammonium ion. This is Glucosamine-6-phosphate deaminase from Enterococcus faecalis (strain ATCC 700802 / V583).